The following is a 692-amino-acid chain: Transcription factor steA (692 aa).

Residues aspartate 56–aspartate 165 mediate DNA binding. 2 disordered regions span residues serine 406 to serine 507 and leucine 519 to tyrosine 540. A compositionally biased stretch (polar residues) spans arginine 470–glutamine 482. 2 consecutive C2H2-type zinc fingers follow at residues histidine 564 to histidine 588 and tyrosine 594 to histidine 616. Residues alanine 618–proline 665 are disordered. Residues aspartate 629–proline 647 show a composition bias toward acidic residues.

Belongs to the STE12 transcription factor family.

It localises to the nucleus. Transcription factor involved in sexual reproduction. Required for cleistothecial development and ascosporogenesis. Not required for asexual reproduction (conidiation). May act to repress medA expression. The chain is Transcription factor steA (steA) from Emericella nidulans (strain FGSC A4 / ATCC 38163 / CBS 112.46 / NRRL 194 / M139) (Aspergillus nidulans).